The primary structure comprises 599 residues: Nucleoporin p58/p45 (599 aa).

Tandem repeats lie at residues 7 to 8 (FG), 30 to 31 (FG), 44 to 45 (FG), 63 to 64 (FG), and 68 to 69 (FG). The tract at residues 7–579 (FGSGTLGSTT…VSNPASAGFG (573 aa)) is 14 X 2 AA repeats of F-G. Residues 213-247 (NEGLGGIDFSSSSDKKSDKTGTRPEDSKALKDENL) form a disordered region. The span at 225 to 246 (SDKKSDKTGTRPEDSKALKDEN) shows a compositional bias: basic and acidic residues. Coiled-coil stretches lie at residues 256 to 276 (ENLQ…SRMS) and 314 to 381 (ETAQ…SHIT). Threonine 331 is modified (phosphothreonine). Tandem repeats lie at residues 488-489 (FG), 492-493 (FG), 513-514 (FG), 519-520 (FG), 529-530 (FG), 531-532 (FG), 545-546 (FG), 568-569 (FG), and 578-579 (FG). The disordered stretch occupies residues 579–599 (GTGGQLLQLKKPPAGNKRGKR).

Belongs to the NUP58 family. Component of the p62 complex, a complex at least composed of NUP62, NUP54, and NUP58. Interacts with NUTF2. Interacts with SRP1-alpha and Importin p97 proteins when they are together, but not with SRP1-alpha protein alone. O-glycosylated.

The protein localises to the nucleus. The protein resides in the nuclear pore complex. It is found in the nucleus membrane. Functionally, component of the nuclear pore complex, a complex required for the trafficking across the nuclear membrane. This Homo sapiens (Human) protein is Nucleoporin p58/p45.